A 247-amino-acid chain; its full sequence is Protein lin-28 homolog B (247 aa).

Positions 1–22 (MAEGGASKGEEPEKLPGLAEDE) are disordered. Positions 27 to 100 (HGTGHCKWFN…GLESIRVTGP (74 aa)) constitute a CSD domain. Residues Ser-94, Ser-103, and Ser-108 each carry the phosphoserine modification. A disordered region spans residues 96–124 (RVTGPGGSPCLGSERRPKGKTLQKRKPKG). Positions 112 to 123 (PKGKTLQKRKPK) are enriched in basic residues. CCHC-type zinc fingers lie at residues 125-142 (DRCY…ECSL) and 147-164 (KKCH…NCPH). Cys-127, Cys-130, His-135, Cys-140, Cys-149, Cys-152, His-157, and Cys-162 together coordinate Zn(2+). Polar residues predominate over residues 173–186 (SSQGRQEAESQPCS). Residues 173-247 (SSQGRQEAES…GPLIQKRKKT (75 aa)) form a disordered region. The span at 207–219 (VKSEMAEHSDRSP) shows a compositional bias: basic and acidic residues.

This sequence belongs to the lin-28 family.

It localises to the nucleus. Its subcellular location is the nucleolus. Suppressor of microRNA (miRNA) biogenesis, including that of let-7 and possibly of miR107, miR-143 and miR-200c. Binds primary let-7 transcripts (pri-let-7), including pri-let-7g and pri-let-7a-1, and sequester them in the nucleolus, away from the microprocessor complex, hence preventing their processing into mature miRNA. Does not act on pri-miR21. The repression of let-7 expression is required for normal development and contributes to maintain the pluripotent state of embryonic stem cells by preventing let-7-mediated differentiation. When overexpressed, recruits ZCCHC11/TUT4 uridylyltransferase to pre-let-7 transcripts, leading to their terminal uridylation and degradation. This activity might not be relevant in vivo, as LIN28B-mediated inhibition of let-7 miRNA maturation appears to be ZCCHC11-independent. Interaction with target pre-miRNAs occurs via an 5'-GGAG-3' motif in the pre-miRNA terminal loop. Mediates MYC-induced let-7 repression. When overexpressed, may stimulate growth of carcinoma cell lines. The protein is Protein lin-28 homolog B (Lin28b) of Mus musculus (Mouse).